The sequence spans 148 residues: UPF0178 protein Pcar_2632 (148 aa).

Belongs to the UPF0178 family.

This is UPF0178 protein Pcar_2632 from Syntrophotalea carbinolica (strain DSM 2380 / NBRC 103641 / GraBd1) (Pelobacter carbinolicus).